Here is a 128-residue protein sequence, read N- to C-terminus: NADH-quinone oxidoreductase subunit A (128 aa).

A run of 3 helical transmembrane segments spans residues 5 to 25 (IPIL…VVIA), 72 to 92 (LTAM…PWAV), and 100 to 120 (FALV…AYVW).

This sequence belongs to the complex I subunit 3 family. NDH-1 is composed of 14 different subunits. Subunits NuoA, H, J, K, L, M, N constitute the membrane sector of the complex.

The protein resides in the cell membrane. It carries out the reaction a quinone + NADH + 5 H(+)(in) = a quinol + NAD(+) + 4 H(+)(out). Its function is as follows. NDH-1 shuttles electrons from NADH, via FMN and iron-sulfur (Fe-S) centers, to quinones in the respiratory chain. The immediate electron acceptor for the enzyme in this species is believed to be a menaquinone. Couples the redox reaction to proton translocation (for every two electrons transferred, four hydrogen ions are translocated across the cytoplasmic membrane), and thus conserves the redox energy in a proton gradient. The polypeptide is NADH-quinone oxidoreductase subunit A (Mycobacterium bovis (strain ATCC BAA-935 / AF2122/97)).